A 448-amino-acid polypeptide reads, in one-letter code: Late embryogenesis abundant protein ECP63 (448 aa).

2 stretches are compositionally biased toward basic and acidic residues: residues 282-326 (TEEA…EEAG) and 334-354 (QKTR…KDSA). Disordered regions lie at residues 282 to 360 (TEEA…RGNE) and 411 to 448 (SKPG…KGKL). A coiled-coil region spans residues 297-331 (KENMEKAGEVTRQKMEEMRLEGKELKEEAGAKAQE). The segment covering 420-432 (LKASDQMTGQTFN) has biased composition (polar residues). The span at 435–448 (GRMDDDARKDKGKL) shows a compositional bias: basic and acidic residues.

It belongs to the LEA type 4 family. As to expression, expressed in mature seeds.

Its function is as follows. May be involved in the BHLH109-mediated regulation of somatic embryogenesis. The sequence is that of Late embryogenesis abundant protein ECP63 from Arabidopsis thaliana (Mouse-ear cress).